Here is a 489-residue protein sequence, read N- to C-terminus: Rhamnulokinase (489 aa).

13-17 (ASSGR) contacts ATP. A disulfide bridge connects residues cysteine 68 and cysteine 222. Substrate is bound by residues glycine 83 and 236–238 (HDT). The Proton acceptor role is filled by aspartate 237. Threonine 259 lines the ATP pocket. Asparagine 296 contacts substrate. Glutamine 304 serves as a coordination point for ATP. Cysteine 353 and cysteine 370 form a disulfide bridge. An ATP-binding site is contributed by glycine 402. Cysteine 413 and cysteine 417 form a disulfide bridge.

This sequence belongs to the rhamnulokinase family. Requires Mg(2+) as cofactor.

It carries out the reaction L-rhamnulose + ATP = L-rhamnulose 1-phosphate + ADP + H(+). It functions in the pathway carbohydrate degradation; L-rhamnose degradation; glycerone phosphate from L-rhamnose: step 2/3. In terms of biological role, involved in the catabolism of L-rhamnose (6-deoxy-L-mannose). Catalyzes the transfer of the gamma-phosphate group from ATP to the 1-hydroxyl group of L-rhamnulose to yield L-rhamnulose 1-phosphate. This Salmonella heidelberg (strain SL476) protein is Rhamnulokinase.